Consider the following 169-residue polypeptide: Unfolded protein response-inducible protein 1 (169 aa).

Involved in the unfolded protein response (UPR), a transcriptional response which up-regulates genes that enable cells to cope with misfolded, endoplasmic reticulum-retained proteins. UPR is part of the endoplasmic reticulum quality control (ERQC) which prevents the exit of misfolded secretory and membrane proteins from the endoplasmic reticulum. The polypeptide is Unfolded protein response-inducible protein 1 (ULI1) (Saccharomyces cerevisiae (strain ATCC 204508 / S288c) (Baker's yeast)).